The chain runs to 596 residues: Glomulin (596 aa).

An N-acetylalanine modification is found at A2. The tract at residues 2–555 (AVEELQSIIK…EEIPSMPPEM (554 aa)) is alpha-helical region with structural similarity to HEAT repeats. The segment at 299 to 596 (IDQLPMVLSP…STSEENVGIK (298 aa)) is important for interaction with RBX1.

As to quaternary structure, interacts with FKBP4 and FKBP1A. Interacts with RBX1 (via RING domain). Identified in complexes that contain RBX1 plus one of the cullins CUL1, CUL2, CUL3, and CUL4A. Identified in a SCF complex composed of CUL1, RBX1, SKP1, FBXW7 and GLMN. Component of a SCF-like complex consisting of CUL7, RBX1, SKP1, FBXW8 and GLMN. Interacts with unphosphorylated MET and is released upon MET phosphorylation. Post-translationally, phosphorylated on tyrosine residues. Ubiquitous. Detected in embryonic vasculature and embryonic perichondrium, and in adult eye, brain, heart, testis, kidney, smooth muscle and skeletal muscle.

In terms of biological role, regulatory component of cullin-RING-based SCF (SKP1-Cullin-F-box protein) E3 ubiquitin-protein ligase complexes. Inhibits E3 ubiquitin ligase activity by binding to the RING domain of RBX1 and inhibiting its interaction with the E2 ubiquitin-conjugating enzyme CDC34. Inhibits RBX1-mediated neddylation of CUL1. Required for normal stability and normal cellular levels of key components of SCF ubiquitin ligase complexes, including FBXW7, RBX1, CUL1, CUL2, CUL3, CUL4A, and thereby contributes to the regulation of CCNE1 and MYC levels. Essential for normal development of the vasculature. Contributes to the regulation of RPS6KB1 phosphorylation. The sequence is that of Glomulin (Glmn) from Mus musculus (Mouse).